The primary structure comprises 355 residues: MLTAIELANQFQASLVGEASTVFNGLAPLERAQSSQISFLSNPLYRKQAADSSAGALIVSKADLEFLQANPGTHSSGRVYFVAKNPYATFARVAQYFARQSAPIYEPGIHSAAVVDPSASIPASCHIGPFVRIGAGVKLGERVAILGNTFVAENCDIASDTLIYPAVSLYFGTQIGERCIIHSGAVIGADGFGFAPDFSATGGEWVKIPQTGNVVIGSDVEIGASTTIDRGAMSDTIIGSGSKIDNQVQIAHNVVVGNCCVIAGCAAISGSTKIGNFCIIGGAANFAGHLTIADRTTVSGNTSIIRSITEPGQHYTGVYPSMLHGAWEKNAAILRGLDKIRQRLRLLDKNKSTES.

Catalysis depends on histidine 252, which acts as the Proton acceptor.

The protein belongs to the transferase hexapeptide repeat family. LpxD subfamily. In terms of assembly, homotrimer.

It carries out the reaction a UDP-3-O-[(3R)-3-hydroxyacyl]-alpha-D-glucosamine + a (3R)-hydroxyacyl-[ACP] = a UDP-2-N,3-O-bis[(3R)-3-hydroxyacyl]-alpha-D-glucosamine + holo-[ACP] + H(+). It functions in the pathway bacterial outer membrane biogenesis; LPS lipid A biosynthesis. Catalyzes the N-acylation of UDP-3-O-acylglucosamine using 3-hydroxyacyl-ACP as the acyl donor. Is involved in the biosynthesis of lipid A, a phosphorylated glycolipid that anchors the lipopolysaccharide to the outer membrane of the cell. This Polynucleobacter asymbioticus (strain DSM 18221 / CIP 109841 / QLW-P1DMWA-1) (Polynucleobacter necessarius subsp. asymbioticus) protein is UDP-3-O-acylglucosamine N-acyltransferase.